A 1129-amino-acid chain; its full sequence is ATP-dependent DNA helicase mph1 (1129 aa).

3 disordered regions span residues M1–A101, T124–G222, and D236–K306. Residues D45–R63 show a composition bias toward basic and acidic residues. Composition is skewed to polar residues over residues N203 to G222 and I242 to Q285. The span at Q297–K306 shows a compositional bias: basic and acidic residues. In terms of domain architecture, Helicase ATP-binding spans I331–R499. L344–T351 is an ATP binding site. The DEAH box motif lies at D447–H450. In terms of domain architecture, Helicase C-terminal spans V674–I843. Disordered regions lie at residues I863–P930, R1018–D1060, and S1072–D1129. Composition is skewed to basic residues over residues R877–F889 and S1028–Y1044. A compositionally biased stretch (polar residues) spans Q1077–Q1086.

This sequence belongs to the DEAD box helicase family. DEAH subfamily. FANCM sub-subfamily. In terms of assembly, interacts with the MHF histone-fold complex to form the FANCM-MHF complex.

Its subcellular location is the nucleus. The catalysed reaction is ATP + H2O = ADP + phosphate + H(+). Functionally, ATP-dependent DNA helicase involved in DNA damage repair by homologous recombination and in genome maintenance. Capable of unwinding D-loops. Plays a role in limiting crossover recombinants during mitotic DNA double-strand break (DSB) repair. Component of a FANCM-MHF complex which promotes gene conversion at blocked replication forks, probably by reversal of the stalled fork. The chain is ATP-dependent DNA helicase mph1 from Aspergillus oryzae (strain ATCC 42149 / RIB 40) (Yellow koji mold).